The following is a 632-amino-acid chain: MIEIGETMGDQPTNKIVFCERSWKAPVSILAFLILVTFAWGAYLLDNYDEDDYFRGSDDMSVGQFLVRNVAMPDVQRLYYTVPPAVVGVGGGGVNAGPVASGAIVGANGYVITTLHSVANVPDITVQVATSAGIRRFPAQVVKTIPGHNLALLKLQTTEKFLHFRMANIQTVVPGQQVFAFGRNMAGAPLVRQGMVQSSDAPLAVGTTQITHLLRSDAVYSWEQTGGPLVNAQGDLVGINIAATGPTGKVEGFTVPAQVIVSHLQDVVRFKTGGAAGVAPPAAQTVAMGSSSWWSKAKAVVGGPTAVPGMGMNVVQGTVTTGIPSGMPFVDTDHVGGAKIGGYSIADILGLGMLALAAGVTGGMMTMGGGVLQVAGMMVFFGYGMYLIRPVVFLTNVVVYGAAALRNDKAQLVQWDKVKPLIPWGVAGVVIGYFIGNAIGDSVVGVLLGLFALIMAGKAVLEILQPNAGEDTAEAIAAAEAGDEMDELMALAEGTTRPKTSGIALPEGPTRSAVLGLPMGLFSGILGISGGVIEVPLQRYIGRISLQNAIANSSVLVFWASVAGSVVAFIHGGSTGLIHWEAPVTLALVMIPGAYVGGILGARLMRVLPVRVLKGIYAATMAAIAIKMLTTV.

Residues 25–45 traverse the membrane as a helical segment; sequence APVSILAFLILVTFAWGAYLL. The interval 78–268 is protease-like; it reads LYYTVPPAVV…VIVSHLQDVV (191 aa). The a divalent metal cation site is built by histidine 148 and histidine 263. A run of 7 helical transmembrane segments spans residues 340–360, 412–432, 434–454, 513–533, 550–570, 582–602, and 612–632; these read IGGYSIADILGLGMLALAAGV, LVQWDKVKPLIPWGVAGVVIG, FIGNAIGDSVVGVLLGLFALI, AVLGLPMGLFSGILGISGGVI, IANSSVLVFWASVAGSVVAFI, APVTLALVMIPGAYVGGILGA, and VLKGIYAATMAAIAIKMLTTV. Residues 365–632 are TSUP-like; the sequence is MTMGGGVLQV…AIAIKMLTTV (268 aa).

In the N-terminal section; belongs to the peptidase S1C family. It in the C-terminal section; belongs to the 4-toluene sulfonate uptake permease (TSUP) (TC 2.A.102) family. A metal cation serves as cofactor. Post-translationally, subject to proteolytic cleavage by MamE.

It localises to the magnetosome membrane. Functionally, plays 2 roles; promotes magnetite nucleation/formation and activates the MamE protease. Despite its near conservation of a protease-like sequence, this is probably not a protease. Required in conjunction with MamP for proteolysis of at least MamE, itself and MamP. May transport a solute that controls MamE's protease activity. May place individual iron atoms into the magnetite lattice. One of 7 genes (mamLQBIEMO) able to induce magnetosome membrane biogenesis; coexpression of mamLQRBIEMO in a deletion of the 17 gene mamAB operon restores magnetosome vesicle formation but not magnetite biosynthesis. The sequence is that of Probable membrane transporter protein MamO from Magnetospirillum gryphiswaldense (strain DSM 6361 / JCM 21280 / NBRC 15271 / MSR-1).